The following is a 484-amino-acid chain: Glycogen synthase 2 (484 aa).

Arg15 is an ADP-alpha-D-glucose binding site.

It belongs to the glycosyltransferase 1 family. Bacterial/plant glycogen synthase subfamily.

The enzyme catalyses [(1-&gt;4)-alpha-D-glucosyl](n) + ADP-alpha-D-glucose = [(1-&gt;4)-alpha-D-glucosyl](n+1) + ADP + H(+). Its pathway is glycan biosynthesis; glycogen biosynthesis. Functionally, synthesizes alpha-1,4-glucan chains using ADP-glucose. This Geobacter sulfurreducens (strain ATCC 51573 / DSM 12127 / PCA) protein is Glycogen synthase 2.